We begin with the raw amino-acid sequence, 134 residues long: Cytochrome b (134 aa).

3 consecutive transmembrane segments (helical) span residues 33 to 53 (FGSL…FLAM), 77 to 98 (WVLR…YVHV), and 113 to 133 (WNVG…GYVL). Heme b contacts are provided by H83 and H97.

This sequence belongs to the cytochrome b family. In terms of assembly, the cytochrome bc1 complex contains 11 subunits: 3 respiratory subunits (MT-CYB, CYC1 and UQCRFS1), 2 core proteins (UQCRC1 and UQCRC2) and 6 low-molecular weight proteins (UQCRH/QCR6, UQCRB/QCR7, UQCRQ/QCR8, UQCR10/QCR9, UQCR11/QCR10 and a cleavage product of UQCRFS1). This cytochrome bc1 complex then forms a dimer. The cofactor is heme b.

Its subcellular location is the mitochondrion inner membrane. Functionally, component of the ubiquinol-cytochrome c reductase complex (complex III or cytochrome b-c1 complex) that is part of the mitochondrial respiratory chain. The b-c1 complex mediates electron transfer from ubiquinol to cytochrome c. Contributes to the generation of a proton gradient across the mitochondrial membrane that is then used for ATP synthesis. This Anoura caudifer (Hairy-legged long-tongued bat) protein is Cytochrome b (MT-CYB).